The sequence spans 382 residues: MIOREX complex component 5 (382 aa).

Residues 1 to 12 (MRRTFSQLATRL) constitute a mitochondrion transit peptide.

In terms of assembly, associates with the mitochondrial ribosome.

The protein localises to the mitochondrion. In terms of biological role, component of MIOREX complexes, large expressome-like assemblies of ribosomes with factors involved in all the steps of post-transcriptional gene expression. The sequence is that of MIOREX complex component 5 from Saccharomyces cerevisiae (strain ATCC 204508 / S288c) (Baker's yeast).